A 398-amino-acid chain; its full sequence is Ras-related GTP-binding protein C (398 aa).

The tract at residues 1–56 (MSLQYGAEETPLAGSYGAADSFPKDFGYGVEEEEEEAAAGGGGGAGAGGGCGPGGA) is disordered. Position 2 is an N-acetylserine (Ser-2). A phosphoserine mark is found at Ser-2 and Ser-15. Gly residues predominate over residues 39 to 55 (AGGGGGAGAGGGCGPGG). GDP contacts are provided by Arg-70, Ser-71, Gly-72, Lys-73, Ser-74, and Ser-75. Lys-73 provides a ligand contact to GTP. GTP-binding residues include Thr-89 and Thr-95. Residue Thr-95 is modified to Phosphothreonine. 4 residues coordinate GDP: His-177, Lys-178, Asp-180, and Ile-219. Asp-180 is a GTP binding site.

This sequence belongs to the GTR/RAG GTP-binding protein family. In terms of assembly, forms a heterodimer with RRAGA, in a sequence-independent manner, and RRAGB. Heterodimerization stabilizes proteins of the heterodimer. The GDP-bound form of RRAGC (in complex with the GTP-bound form of RRAGA or RRAGB), interacts with RPTOR, thereby promoting recruitment of mTORC1 to the lysosomes. Component of the lysosomal folliculin complex (LFC), composed of FLCN, FNIP1 (or FNIP2), RagA/RRAGA or RagB/RRAGB GDP-bound, RagC/RRAGC or RagD/RRAGD GTP-bound, and Ragulator. Interacts with NOL8. Interacts with SH3BP4; the interaction with this negative regulator is most probably direct, preferentially occurs with the inactive GDP-bound form of RRAGB, is negatively regulated by amino acids and prevents interaction with RPTOR. The Rag heterodimer interacts with SLC38A9; the probable amino acid sensor. Interacts with SESN1, SESN2 and SESN3. Interacts with PIP4P1. The GDP-bound form interacts with TFEB. The GDP-bound form interacts with TFE3. Expressed most abundantly in kidney. Moderately expressed in brain, ovary, and testis, and detected at lower levels in heart, liver, and muscle. Not detected in lung, spleen, and small intestine. Widely expressed in tumor cells, with expression being specifically up-regulated in highly metastatic cells.

Its subcellular location is the cytoplasm. The protein localises to the nucleus. It localises to the lysosome membrane. The catalysed reaction is GTP + H2O = GDP + phosphate + H(+). Its activity is regulated as follows. The activation of RagC/RRAGC is mediated by a GTPase activating protein (GAP). In high-amino acid conditions, activated by GTPase activating protein FLCN that stimulates RRAGC GTPase activity to turn it into its active GDP-bound form. In response to amino acid depletion, the GATOR1 complex inactivates RagC/RRAGC by securing the GTP-bound inactive form. Functionally, guanine nucleotide-binding protein that plays a crucial role in the cellular response to amino acid availability through regulation of the mTORC1 signaling cascade. Forms heterodimeric Rag complexes with RagA/RRAGA or RagB/RRAGB and cycles between an inactive GTP-bound and an active GDP-bound form: RagC/RRAGC is in its active form when GDP-bound RagC/RRAGC forms a complex with GTP-bound RagA/RRAGA (or RagB/RRAGB) and in an inactive form when GTP-bound RagC/RRAGC heterodimerizes with GDP-bound RagA/RRAGA (or RagB/RRAGB). In its GDP-bound active form, promotes the recruitment of mTORC1 to the lysosomes and its subsequent activation by the GTPase RHEB. This is a crucial step in the activation of the MTOR signaling cascade by amino acids. Also plays a central role in the non-canonical mTORC1 complex, which acts independently of RHEB and specifically mediates phosphorylation of MiT/TFE factors TFEB and TFE3: GDP-bound RagC/RRAGC mediates recruitment of MiT/TFE factors TFEB and TFE3. The polypeptide is Ras-related GTP-binding protein C (Mus musculus (Mouse)).